Reading from the N-terminus, the 116-residue chain is Promotilin (116 aa).

Residues 1 to 25 (MVSRKAVAVLLMVHVAVMLASQTEA) form the signal peptide. The tract at residues 39–74 (REKERNKGQKKSLIVQQRSEEVGPLDPVEPPEEEEN) is disordered.

This sequence belongs to the motilin family.

It localises to the secreted. In terms of biological role, plays an important role in the regulation of interdigestive gastrointestinal motility and indirectly causes rhythmic contraction of duodenal and colonic smooth muscle. The chain is Promotilin (MLN) from Felis catus (Cat).